Reading from the N-terminus, the 338-residue chain is Fructose-bisphosphate aldolase (338 aa).

2 residues coordinate substrate: Arg-50 and Lys-138. Residue Glu-179 is the Proton acceptor of the active site. Lys-221 acts as the Schiff-base intermediate with dihydroxyacetone-P in catalysis.

This sequence belongs to the class I fructose-bisphosphate aldolase family.

It catalyses the reaction beta-D-fructose 1,6-bisphosphate = D-glyceraldehyde 3-phosphate + dihydroxyacetone phosphate. The protein operates within carbohydrate degradation; glycolysis; D-glyceraldehyde 3-phosphate and glycerone phosphate from D-glucose: step 4/4. This Encephalitozoon cuniculi (strain GB-M1) (Microsporidian parasite) protein is Fructose-bisphosphate aldolase.